Here is a 910-residue protein sequence, read N- to C-terminus: DNA mismatch repair protein MutS (910 aa).

ATP is bound at residue G615–S622.

It belongs to the DNA mismatch repair MutS family.

Functionally, this protein is involved in the repair of mismatches in DNA. It is possible that it carries out the mismatch recognition step. This protein has a weak ATPase activity. This chain is DNA mismatch repair protein MutS, found in Clostridium perfringens (strain ATCC 13124 / DSM 756 / JCM 1290 / NCIMB 6125 / NCTC 8237 / Type A).